A 254-amino-acid polypeptide reads, in one-letter code: Phosphoribosylaminoimidazole-succinocarboxamide synthase (254 aa).

This sequence belongs to the SAICAR synthetase family.

It carries out the reaction 5-amino-1-(5-phospho-D-ribosyl)imidazole-4-carboxylate + L-aspartate + ATP = (2S)-2-[5-amino-1-(5-phospho-beta-D-ribosyl)imidazole-4-carboxamido]succinate + ADP + phosphate + 2 H(+). Its pathway is purine metabolism; IMP biosynthesis via de novo pathway; 5-amino-1-(5-phospho-D-ribosyl)imidazole-4-carboxamide from 5-amino-1-(5-phospho-D-ribosyl)imidazole-4-carboxylate: step 1/2. This Brucella canis (strain ATCC 23365 / NCTC 10854 / RM-666) protein is Phosphoribosylaminoimidazole-succinocarboxamide synthase.